We begin with the raw amino-acid sequence, 163 residues long: Lipoprotein signal peptidase (163 aa).

The next 4 helical transmembrane spans lie at 9-29 (AWPWLWLSVLVILLDQLSKYL), 42-62 (ILPFLNFTLNYNTGAAFSFLG), 67-87 (WQIIFFAAISFVVSIFLILWL), and 93-113 (SEIMMSLGLSLIIGGALGNFI). Active-site residues include aspartate 123 and aspartate 141. A helical transmembrane segment spans residues 137-157 (FNVADSAICVGVFLLIVYMLL).

It belongs to the peptidase A8 family.

It localises to the cell inner membrane. The catalysed reaction is Release of signal peptides from bacterial membrane prolipoproteins. Hydrolyzes -Xaa-Yaa-Zaa-|-(S,diacylglyceryl)Cys-, in which Xaa is hydrophobic (preferably Leu), and Yaa (Ala or Ser) and Zaa (Gly or Ala) have small, neutral side chains.. It functions in the pathway protein modification; lipoprotein biosynthesis (signal peptide cleavage). Its function is as follows. This protein specifically catalyzes the removal of signal peptides from prolipoproteins. This is Lipoprotein signal peptidase from Coxiella burnetii (strain Dugway 5J108-111).